We begin with the raw amino-acid sequence, 354 residues long: MTELKNDRYLRALLRQPVDVTPVWMMRQAGRYLPEYKATRAQAGDFMSLCKNAELACEVTLQPLRRYPLDAAILFSDILTVPDAMGLGLYFEAGEGPRFTSPVTCKADVDKLPIPDPEDELGYVMNAVRTIRHELKGEVPLIGFSGSPWTLATYMVEGGSSKAFTVIKKMMYADPQALHALLDKLAKSVTLYLNAQIKAGAQAVMIFDTWGGVLTGRDYQQFSLYYMHKIVDGLLRENDGRRVPVTLFTKGGGQWLEAMAETGCDALGLDWTTDIADARRRVGNKVALQGNMDPSMLYAPPARIEEEVATILAGFGHGEGHVFNLGHGIHQDVPPEHAGVFVEAVHRLSEQYHR.

Residues 27–31, Asp-77, Tyr-154, Thr-209, and His-327 each bind substrate; that span reads RQAGR.

Belongs to the uroporphyrinogen decarboxylase family. In terms of assembly, homodimer.

The protein localises to the cytoplasm. The catalysed reaction is uroporphyrinogen III + 4 H(+) = coproporphyrinogen III + 4 CO2. The protein operates within porphyrin-containing compound metabolism; protoporphyrin-IX biosynthesis; coproporphyrinogen-III from 5-aminolevulinate: step 4/4. Functionally, catalyzes the decarboxylation of four acetate groups of uroporphyrinogen-III to yield coproporphyrinogen-III. This Shigella flexneri serotype 5b (strain 8401) protein is Uroporphyrinogen decarboxylase.